Here is a 231-residue protein sequence, read N- to C-terminus: Vacuolar protein sorting-associated protein 24 (231 aa).

Residues 184-195 (KAADAATHREQS) show a composition bias toward basic and acidic residues. The interval 184–214 (KAADAATHREQSLKQALPSLSNGIAKDSTEI) is disordered.

Belongs to the SNF7 family. In terms of assembly, component of the endosomal sorting required for transport complex III (ESCRT-III).

Its subcellular location is the endosome membrane. It localises to the endomembrane system. Class E VPS protein implicated in concentration and sorting of cargo proteins of the multivesicular body (MVB) for incorporation into intralumenal vesicles. The lumenal sequestrated membrane proteins will be targeted into the vacuole after fusion of the endosome with the vacuole. In Schizosaccharomyces pombe (strain 972 / ATCC 24843) (Fission yeast), this protein is Vacuolar protein sorting-associated protein 24 (vps24).